We begin with the raw amino-acid sequence, 550 residues long: Hydroxylamine reductase (550 aa).

[2Fe-2S] cluster is bound by residues Cys3, Cys6, Cys18, and Cys25. Positions 249, 273, 317, 405, 433, 458, 492, and 494 each coordinate hybrid [4Fe-2O-2S] cluster. Position 405 is a cysteine persulfide (Cys405).

Belongs to the HCP family. It depends on [2Fe-2S] cluster as a cofactor. Hybrid [4Fe-2O-2S] cluster serves as cofactor.

It is found in the cytoplasm. The catalysed reaction is A + NH4(+) + H2O = hydroxylamine + AH2 + H(+). Functionally, catalyzes the reduction of hydroxylamine to form NH(3) and H(2)O. In Salmonella gallinarum (strain 287/91 / NCTC 13346), this protein is Hydroxylamine reductase.